The following is a 546-amino-acid chain: Chaperonin GroEL (546 aa).

Residues 30–33, Lys51, 87–91, Gly415, 478–480, and Asp494 each bind ATP; these read TMGP, DGTTT, and NAA.

It belongs to the chaperonin (HSP60) family. In terms of assembly, forms a cylinder of 14 subunits composed of two heptameric rings stacked back-to-back. Interacts with the co-chaperonin GroES.

Its subcellular location is the cytoplasm. It catalyses the reaction ATP + H2O + a folded polypeptide = ADP + phosphate + an unfolded polypeptide.. Together with its co-chaperonin GroES, plays an essential role in assisting protein folding. The GroEL-GroES system forms a nano-cage that allows encapsulation of the non-native substrate proteins and provides a physical environment optimized to promote and accelerate protein folding. The sequence is that of Chaperonin GroEL from Wolinella succinogenes (strain ATCC 29543 / DSM 1740 / CCUG 13145 / JCM 31913 / LMG 7466 / NCTC 11488 / FDC 602W) (Vibrio succinogenes).